Reading from the N-terminus, the 114-residue chain is Putative protein TfaS (114 aa).

This sequence belongs to the tfa family.

This Escherichia coli (strain K12) protein is Putative protein TfaS (tfaS).